Consider the following 398-residue polypeptide: Acetate kinase (398 aa).

N8 provides a ligand contact to Mg(2+). ATP is bound at residue K15. Residue R89 coordinates substrate. Residue D146 is the Proton donor/acceptor of the active site. ATP contacts are provided by residues 206–210 (HIGNG), 283–285 (DMR), and 331–335 (GMGEN). Position 383 (E383) interacts with Mg(2+).

The protein belongs to the acetokinase family. As to quaternary structure, homodimer. Mg(2+) is required as a cofactor. It depends on Mn(2+) as a cofactor.

The protein resides in the cytoplasm. The enzyme catalyses acetate + ATP = acetyl phosphate + ADP. It functions in the pathway metabolic intermediate biosynthesis; acetyl-CoA biosynthesis; acetyl-CoA from acetate: step 1/2. In terms of biological role, catalyzes the formation of acetyl phosphate from acetate and ATP. Can also catalyze the reverse reaction. In Streptococcus pyogenes serotype M1, this protein is Acetate kinase.